Here is a 95-residue protein sequence, read N- to C-terminus: Small ribosomal subunit protein uS14 (95 aa).

This sequence belongs to the universal ribosomal protein uS14 family. Part of the 30S ribosomal subunit. Contacts proteins S3 and S10.

In terms of biological role, binds 16S rRNA, required for the assembly of 30S particles and may also be responsible for determining the conformation of the 16S rRNA at the A site. The protein is Small ribosomal subunit protein uS14 (rpsN) of Carsonella ruddii.